We begin with the raw amino-acid sequence, 222 residues long: 7-cyano-7-deazaguanine synthase (222 aa).

8 to 18 (LSGGMDSTTLA) lines the ATP pocket. Residues Cys188, Cys196, Cys199, and Cys202 each coordinate Zn(2+).

Belongs to the QueC family. Zn(2+) serves as cofactor.

It catalyses the reaction 7-carboxy-7-deazaguanine + NH4(+) + ATP = 7-cyano-7-deazaguanine + ADP + phosphate + H2O + H(+). It participates in purine metabolism; 7-cyano-7-deazaguanine biosynthesis. Catalyzes the ATP-dependent conversion of 7-carboxy-7-deazaguanine (CDG) to 7-cyano-7-deazaguanine (preQ(0)). This chain is 7-cyano-7-deazaguanine synthase, found in Methanoculleus marisnigri (strain ATCC 35101 / DSM 1498 / JR1).